Reading from the N-terminus, the 1464-residue chain is Glutamate receptor ionotropic, NMDA 2A (1464 aa).

The first 22 residues, 1–22 (MGRVGYWTLLVLPALLVWRGPA), serve as a signal peptide directing secretion. The Extracellular segment spans residues 23–556 (PSAAAEKGPP…SAFLEPFSAS (534 aa)). Position 44 (histidine 44) interacts with Zn(2+). Asparagine 75 carries an N-linked (GlcNAc...) asparagine glycan. Cysteine 87 and cysteine 320 are oxidised to a cystine. The Zn(2+) site is built by histidine 128, glutamate 266, and aspartate 282. N-linked (GlcNAc...) asparagine glycans are attached at residues asparagine 340, asparagine 380, asparagine 443, and asparagine 444. 2 disulfide bridges follow: cysteine 429/cysteine 455 and cysteine 436/cysteine 456. Residues serine 511, threonine 513, and arginine 518 each coordinate L-glutamate. An N-linked (GlcNAc...) asparagine glycan is attached at asparagine 541. The helical transmembrane segment at 557–576 (VWVMMFVMLLIVSAIAVFVF) threads the bilayer. At 577–600 (EYFSPVGYNRNLAKGKAPHGPSFT) the chain is on the cytoplasmic side. The tract at residues 599–620 (FTIGKAIWLLWGLVFNNSVPVQ) is pore-forming. The segment at residues 601–615 (IGKAIWLLWGLVFNN) is an intramembrane region (discontinuously helical). Residues 616-625 (SVPVQNPKGT) are Cytoplasmic-facing. The helical transmembrane segment at 626 to 646 (TSKIMVSVWAFFAVIFLASYT) threads the bilayer. Topologically, residues 647–814 (ANLAAFMIQE…NEVMSSQLDI (168 aa)) are extracellular. Asparagine 687 carries an N-linked (GlcNAc...) asparagine glycan. Serine 689, threonine 690, and aspartate 731 together coordinate L-glutamate. Cysteine 745 and cysteine 800 form a disulfide bridge. Residues 815–835 (DNMAGVFYMLAAAMALSLITF) form a helical membrane-spanning segment. Over 836–1464 (IWEHLFYWKL…KKMPSIESDV (629 aa)) the chain is Cytoplasmic. Serine 882, serine 890, and serine 929 each carry phosphoserine. Composition is skewed to polar residues over residues 1001-1010 (STESKVNSRP) and 1023-1032 (QDSLSQNPVS). Disordered stretches follow at residues 1001-1088 (STES…NFKR) and 1148-1180 (PDPY…GLSN). At serine 1025 the chain carries Phosphoserine. Basic and acidic residues-rich tracts occupy residues 1033-1043 (QRDEATAENRT) and 1052-1061 (LPEEMAHSDI). Serine 1059 and serine 1062 each carry phosphoserine. Over residues 1070–1087 (CHREPDNSKNPKTKDNFK) the composition is skewed to basic and acidic residues. Residues 1165–1180 (LPMNRNPLQNEEGLSN) are compositionally biased toward polar residues. 2 positions are modified to phosphoserine: serine 1198 and serine 1291. The segment at 1335–1372 (KLSGKKSSLFPQGLEDSKRSKSLLPDHTSDNPFLHSHR) is disordered. A PDZ-binding motif is present at residues 1462–1464 (SDV).

Belongs to the glutamate-gated ion channel (TC 1.A.10.1) family. NR2A/GRIN2A subfamily. As to quaternary structure, heterotetramer. Forms heterotetrameric channels composed of two GluN1/zeta subunits (GRIN1), and two identical GluN2/epsilon subunits (GRIN2A, GRIN2B, GRIN2C or GRIN2D) or GluN3 subunits (GRIN3A or GRIN3B) (in vitro). Can also form heterotetrameric channels that contain at least two GluN1 subunits and at least two different GluN2 subunits (or a combination of one GluN2 and one GluN3 subunits) (in vitro). In vivo, the subunit composition may depend on the expression levels of the different subunits. Found in a complex with GRIN1, GRIN3A and PPP2CB. Found in a complex with GRIN1 and GRIN3B. Interacts with AIP1. Interacts with HIP1 and NETO1. Interacts with SNX27 (via PDZ domain); the interaction is required for recycling to the plasma membrane when endocytosed and prevent degradation in lysosomes. Interacts with PDZ domains of PATJ and DLG4. Interacts with LRFN2. Interacts with RPH3A and DLG4; this ternary complex regulates NMDA receptor composition at postsynaptic membranes. Interacts with SORCS2. Interacts with ARC; preventing ARC oligomerization. Interacts (via the extreme C-terminus) with FRMPD2 (the second PDZ domain); the interaction is direct and is likely to promote NMDAR-mediated neural signal transmission. GRIN2A binds FRMPD2 with lower affinity than GRIN2B.

The protein resides in the cell projection. It is found in the dendritic spine. It localises to the cell membrane. Its subcellular location is the synapse. The protein localises to the postsynaptic cell membrane. The protein resides in the cytoplasmic vesicle membrane. It catalyses the reaction Ca(2+)(in) = Ca(2+)(out). It carries out the reaction Na(+)(in) = Na(+)(out). The enzyme catalyses K(+)(in) = K(+)(out). Functionally, component of N-methyl-D-aspartate (NMDA) receptors (NMDARs) that function as heterotetrameric, ligand-gated cation channels with high calcium permeability and voltage-dependent block by Mg(2+). NMDARs participate in synaptic plasticity for learning and memory formation by contributing to the slow phase of excitatory postsynaptic current, long-term synaptic potentiation, and learning. Channel activation requires binding of the neurotransmitter L-glutamate to the GluN2 subunit, glycine or D-serine binding to the GluN1 subunit, plus membrane depolarization to eliminate channel inhibition by Mg(2+). NMDARs mediate simultaneously the potasium efflux and the influx of calcium and sodium. Each GluN2 subunit confers differential attributes to channel properties, including activation, deactivation and desensitization kinetics, pH sensitivity, Ca2(+) permeability, and binding to allosteric modulators. Participates in the synaptic plasticity regulation through activation by the L-glutamate releaseed by BEST1, into the synaptic cleft, upon F2R/PAR-1 activation in astrocyte. The sequence is that of Glutamate receptor ionotropic, NMDA 2A from Pan troglodytes (Chimpanzee).